A 130-amino-acid polypeptide reads, in one-letter code: Cytidine deaminase (130 aa).

Positions 3–130 constitute a CMP/dCMP-type deaminase domain; the sequence is VNLEWIIKQL…ELLMNGFKKS (128 aa). 43 to 45 is a binding site for substrate; it reads NIE. Cys54 provides a ligand contact to Zn(2+). Glu56 (proton donor) is an active-site residue. Residues Cys88 and Cys91 each coordinate Zn(2+).

This sequence belongs to the cytidine and deoxycytidylate deaminase family. Homodimer. It depends on Zn(2+) as a cofactor.

The catalysed reaction is cytidine + H2O + H(+) = uridine + NH4(+). The enzyme catalyses 2'-deoxycytidine + H2O + H(+) = 2'-deoxyuridine + NH4(+). In terms of biological role, this enzyme scavenges exogenous and endogenous cytidine and 2'-deoxycytidine for UMP synthesis. The polypeptide is Cytidine deaminase (cdd) (Mycoplasma genitalium (strain ATCC 33530 / DSM 19775 / NCTC 10195 / G37) (Mycoplasmoides genitalium)).